The following is a 639-amino-acid chain: Threonine--tRNA ligase (639 aa).

Residues 1–61 (MIRITLPDNS…DHDARLQIIT (61 aa)) form the TGS domain. A catalytic region spans residues 242-533 (DHRRLGRELD…LIEQHAGALP (292 aa)). The Zn(2+) site is built by cysteine 333, histidine 384, and histidine 510.

It belongs to the class-II aminoacyl-tRNA synthetase family. As to quaternary structure, homodimer. Zn(2+) is required as a cofactor.

It localises to the cytoplasm. It carries out the reaction tRNA(Thr) + L-threonine + ATP = L-threonyl-tRNA(Thr) + AMP + diphosphate + H(+). In terms of biological role, catalyzes the attachment of threonine to tRNA(Thr) in a two-step reaction: L-threonine is first activated by ATP to form Thr-AMP and then transferred to the acceptor end of tRNA(Thr). Also edits incorrectly charged L-seryl-tRNA(Thr). This is Threonine--tRNA ligase from Paracidovorax citrulli (strain AAC00-1) (Acidovorax citrulli).